The chain runs to 220 residues: UPF0319 protein YccT (220 aa).

A signal peptide spans 1 to 20 (MKTGIVTTLIALCLPVSVFA).

The protein belongs to the UPF0319 family.

In Shigella flexneri serotype 5b (strain 8401), this protein is UPF0319 protein YccT.